The sequence spans 191 residues: uncharacterized protein (191 aa).

2 disordered regions span residues 1 to 42 (MSEE…DADA) and 145 to 191 (QNQE…IDLD). Composition is skewed to basic and acidic residues over residues 11 to 26 (PRPD…RATG) and 147 to 178 (QERR…RDEG).

In terms of assembly, it may form a heterotetramer of two glucokinase subunits (glk) with two ORF2 proteins.

In terms of biological role, may be involved in glucose transport or metabolism. This is an uncharacterized protein from Streptomyces coelicolor (strain ATCC BAA-471 / A3(2) / M145).